The chain runs to 198 residues: MKIKTAEFVISNSKVDHCPNSTLPEYAFIGRSNVGKSSLINMLTGRKSLAKTSAKPGKTQLINHFLINNNWHLVDLPGYGYAQVSKSTKKVFQKFITAYFKKREQMICAFVLIDSRHKPQPIDMEFMQWLGEHNIPFCIIFTKADKLKPKILDKNIENYKNEMLESWVEMPEYFITSATSKLGQDDILDYIEGINNSI.

In terms of domain architecture, EngB-type G spans 22-197 (TLPEYAFIGR…LDYIEGINNS (176 aa)). Residues 30–37 (GRSNVGKS), 57–61 (GKTQL), 75–78 (DLPG), 142–145 (TKAD), and 175–178 (ITSA) each bind GTP. Mg(2+)-binding residues include serine 37 and threonine 59.

It belongs to the TRAFAC class TrmE-Era-EngA-EngB-Septin-like GTPase superfamily. EngB GTPase family. It depends on Mg(2+) as a cofactor.

Its function is as follows. Necessary for normal cell division and for the maintenance of normal septation. This Christiangramia forsetii (strain DSM 17595 / CGMCC 1.15422 / KT0803) (Gramella forsetii) protein is Probable GTP-binding protein EngB.